The following is a 326-amino-acid chain: Biotin synthase (326 aa).

The 231-residue stretch at 41-271 (YHVQLASLLS…EARVRLSAGR (231 aa)) folds into the Radical SAM core domain. [4Fe-4S] cluster contacts are provided by Cys56, Cys60, and Cys63. The [2Fe-2S] cluster site is built by Cys102, Cys134, Cys194, and Arg266.

It belongs to the radical SAM superfamily. Biotin synthase family. In terms of assembly, homodimer. Requires [4Fe-4S] cluster as cofactor. It depends on [2Fe-2S] cluster as a cofactor.

It carries out the reaction (4R,5S)-dethiobiotin + (sulfur carrier)-SH + 2 reduced [2Fe-2S]-[ferredoxin] + 2 S-adenosyl-L-methionine = (sulfur carrier)-H + biotin + 2 5'-deoxyadenosine + 2 L-methionine + 2 oxidized [2Fe-2S]-[ferredoxin]. It participates in cofactor biosynthesis; biotin biosynthesis; biotin from 7,8-diaminononanoate: step 2/2. Its function is as follows. Catalyzes the conversion of dethiobiotin (DTB) to biotin by the insertion of a sulfur atom into dethiobiotin via a radical-based mechanism. The chain is Biotin synthase from Synechococcus sp. (strain RCC307).